Reading from the N-terminus, the 137-residue chain is Ribosome-binding factor A (137 aa).

It belongs to the RbfA family. In terms of assembly, monomer. Binds 30S ribosomal subunits, but not 50S ribosomal subunits or 70S ribosomes.

Its subcellular location is the cytoplasm. In terms of biological role, one of several proteins that assist in the late maturation steps of the functional core of the 30S ribosomal subunit. Associates with free 30S ribosomal subunits (but not with 30S subunits that are part of 70S ribosomes or polysomes). Required for efficient processing of 16S rRNA. May interact with the 5'-terminal helix region of 16S rRNA. This chain is Ribosome-binding factor A, found in Erwinia tasmaniensis (strain DSM 17950 / CFBP 7177 / CIP 109463 / NCPPB 4357 / Et1/99).